A 397-amino-acid polypeptide reads, in one-letter code: Tryptophan synthase beta chain (397 aa).

The residue at position 87 (Lys87) is an N6-(pyridoxal phosphate)lysine.

This sequence belongs to the TrpB family. As to quaternary structure, tetramer of two alpha and two beta chains. Pyridoxal 5'-phosphate is required as a cofactor.

It catalyses the reaction (1S,2R)-1-C-(indol-3-yl)glycerol 3-phosphate + L-serine = D-glyceraldehyde 3-phosphate + L-tryptophan + H2O. The protein operates within amino-acid biosynthesis; L-tryptophan biosynthesis; L-tryptophan from chorismate: step 5/5. The beta subunit is responsible for the synthesis of L-tryptophan from indole and L-serine. In Escherichia coli O17:K52:H18 (strain UMN026 / ExPEC), this protein is Tryptophan synthase beta chain.